A 43-amino-acid chain; its full sequence is Mu-conotoxin-like CalTx 12.2.1E (43 aa).

A propeptide is located at residue Arg1. Disulfide bonds link Cys4/Cys16, Cys11/Cys24, Cys18/Cys29, and Cys23/Cys35. The residue at position 31 (Trp31) is a 6'-bromotryptophan. The residue at position 36 (Pro36) is a 4-hydroxyproline. Position 40 is a 6'-bromotryptophan (Trp40).

In terms of tissue distribution, expressed by the venom duct.

Its subcellular location is the secreted. Mu-conotoxins block voltage-gated sodium channels. This toxin reversibly blocks voltage-gated sodium channel in cephalopods, with no alteration in the voltage dependence of sodium conductance or on the kinetics of inactivation. In Californiconus californicus (California cone), this protein is Mu-conotoxin-like CalTx 12.2.1E.